The primary structure comprises 1171 residues: 7,8-linoleate diol synthase (1171 aa).

Residues Met1 to Ser22 are compositionally biased toward low complexity. Residues Met1–Gln56 form a disordered region. A fatty acid alpha-dioxygenase region spans residues Thr114–Ile457. His213 lines the heme b pocket. Positions 214, 229, 231, 233, and 235 each coordinate Ca(2+). Tyr385 is a catalytic residue. His388 provides a ligand contact to heme b. Residues Lys675–Asp1171 form an epoxy alcohol synthase region. A disordered region spans residues Gly873–Gly900. Residues Gly881–Gly895 are compositionally biased toward low complexity. Cys1089 provides a ligand contact to heme.

In the N-terminal section; belongs to the peroxidase family. This sequence in the C-terminal section; belongs to the cytochrome P450 family. Homotetramer. Heme b is required as a cofactor. Ca(2+) serves as cofactor. It depends on heme as a cofactor.

The enzyme catalyses (9Z,12Z)-octadecadienoate + O2 = (8R,9Z,12Z)-8-hydroperoxyoctadeca-9,12-dienoate. The catalysed reaction is (8R,9Z,12Z)-8-hydroperoxyoctadeca-9,12-dienoate = (7S,8S,9Z,12Z)-7,8-dihydroxyoctadeca-9,12-dienoate. 7,8-linoleate diol synthase is a bifunctional enzyme that converts linoleic acid (18:2n-6) into 8-hydroperoxy-8(E),12(Z)-octadecadienoic acid (8-HPODE) and then catalyzes the isomerization of the resulting hydroperoxide to 7,8-dihydroxy-9(Z),12(Z)-octadecadienoic acid (7,8-DiHODE). This chain is 7,8-linoleate diol synthase, found in Pyricularia oryzae (strain 70-15 / ATCC MYA-4617 / FGSC 8958) (Rice blast fungus).